We begin with the raw amino-acid sequence, 408 residues long: G2/mitotic-specific cyclin-B (408 aa).

It belongs to the cyclin family. Cyclin AB subfamily. In terms of assembly, interacts with the CDC2 protein kinase to form a serine/threonine kinase holoenzyme complex also known as maturation promoting factor (MPF). The cyclin subunit imparts substrate specificity to the complex.

Its function is as follows. Essential for the control of the cell cycle at the G2/M (mitosis) transition. The chain is G2/mitotic-specific cyclin-B from Patella vulgata (Common limpet).